Consider the following 171-residue polypeptide: Co-chaperone protein HscB (171 aa).

The J domain maps to 2-74 (DYFTLFGLPA…LTRAEYLLSL (73 aa)).

This sequence belongs to the HscB family. In terms of assembly, interacts with HscA and stimulates its ATPase activity. Interacts with IscU.

Co-chaperone involved in the maturation of iron-sulfur cluster-containing proteins. Seems to help targeting proteins to be folded toward HscA. This chain is Co-chaperone protein HscB, found in Klebsiella pneumoniae subsp. pneumoniae (strain ATCC 700721 / MGH 78578).